The chain runs to 255 residues: Small ribosomal subunit protein uS2 (255 aa).

This sequence belongs to the universal ribosomal protein uS2 family.

In Streptococcus pyogenes serotype M3 (strain ATCC BAA-595 / MGAS315), this protein is Small ribosomal subunit protein uS2.